We begin with the raw amino-acid sequence, 467 residues long: Iroquois-class homeodomain protein irx-1 (467 aa).

Positions 126–188 (DPGRPKNATR…NARRRLKKEN (63 aa)) form a DNA-binding region, homeobox; TALE-type. Disordered regions lie at residues 198 to 307 (EDDN…PHNK), 319 to 342 (SPDG…PIQH), and 410 to 467 (SLSS…LPSA). Acidic residues-rich tracts occupy residues 215–225 (EDDEEIDLESI) and 233–244 (NDGEQSNEEEDE). Basic and acidic residues predominate over residues 245 to 262 (KLEHLRQGEKESFKKESE). Residues 415 to 431 (KTPERTSPKHSDRENLP) show a composition bias toward basic and acidic residues. Residues 447–460 (RENTLSQQEGTSRI) show a composition bias toward polar residues.

This sequence belongs to the TALE/IRO homeobox family. As to expression, expressed in the neural plate in overlapping patterns with other irx members, which all share an anterior border of expression. Also expressed in the mesoderm, placodes and notochord. Broadly expressed in the tailbud rhombencephalon (hindbrain). Outside the nervous system and at tailbud stages, expressed in the developing otic vesicle, branchial arches, prospective heart region and pronephros.

Its subcellular location is the nucleus. Acts partially redundantly with other irx members in neural patterning. Required for formation of the posterior forebrain, midbrain, hindbrain, and to a lesser extent, spinal cord. Acts early in neural plate development to induce expression of some but not all proneural genes, and specify a neural precursor state. Also up-regulates repressors that prevent neuronal differentiation. Patterns the neuroectoderm in both the anterior/posterior and dorsal/ventral axes. Acts primarily as a transcriptional repressor during neural development, and binds to the bmp4 promoter to repress gene expression and thus mediate down-regulation of bmp4 by wnt signaling. Controls multiple processes through bmp4-repression including neural plate development, neural crest specification and Spemann organizer development. Involved in the specification of the preplacodal field at the anterior border of the neural plate. Regulates the genetic cascade of interactions that are necessary for positioning the isthmus organizer and the formation of the midbrain-hindbrain boundary. Required during at least two stages of pronephros kidney development; during neurula stages, maintains transcription of key renal genes to define the size and identity of the pronephric anlage, probably in part through regulation of bmp-signaling. Subsequently required for proper formation of the intermediate tubule segment of the pronephros. Acts principally as a transcriptional activator during pronephros development. In Xenopus tropicalis (Western clawed frog), this protein is Iroquois-class homeodomain protein irx-1.